Consider the following 304-residue polypeptide: Oxygen-dependent coproporphyrinogen-III oxidase (304 aa).

Substrate is bound at residue serine 95. Residues histidine 99 and histidine 109 each contribute to the a divalent metal cation site. Histidine 109 (proton donor) is an active-site residue. 111–113 (NVR) provides a ligand contact to substrate. Residues histidine 148 and histidine 178 each coordinate a divalent metal cation. An important for dimerization region spans residues 243 to 278 (YVEFNLVYDRGTLFGLQSGGRTESILMSLPPLVRWR). Position 261–263 (261–263 (GGR)) interacts with substrate.

It belongs to the aerobic coproporphyrinogen-III oxidase family. As to quaternary structure, homodimer. It depends on a divalent metal cation as a cofactor.

The protein resides in the cytoplasm. The enzyme catalyses coproporphyrinogen III + O2 + 2 H(+) = protoporphyrinogen IX + 2 CO2 + 2 H2O. It functions in the pathway porphyrin-containing compound metabolism; protoporphyrin-IX biosynthesis; protoporphyrinogen-IX from coproporphyrinogen-III (O2 route): step 1/1. Functionally, involved in the heme biosynthesis. Catalyzes the aerobic oxidative decarboxylation of propionate groups of rings A and B of coproporphyrinogen-III to yield the vinyl groups in protoporphyrinogen-IX. The chain is Oxygen-dependent coproporphyrinogen-III oxidase from Thioalkalivibrio sulfidiphilus (strain HL-EbGR7).